A 632-amino-acid polypeptide reads, in one-letter code: Deoxynucleoside triphosphate triphosphohydrolase SAMHD1 (632 aa).

The disordered stretch occupies residues 1–22; the sequence is MKGINGAKRVRHDASPSAQDGY. The region spanning 44–107 is the SAM domain; it reads WDVEEVCLFL…LSCLRMLCQN (64 aa). Positions 113 and 114 each coordinate GTP. N116 contacts dGTP. 3 residues coordinate GTP: D134, Q139, and R142. DGTP is bound by residues Q146, L147, V153, and R161. Q146 contacts dATP. Q146 contacts dCTP. Q146 is a dTTP binding site. DATP is bound at residue R161. R161 is a dCTP binding site. DTTP is bound at residue R161. The HD domain occupies 161-321; that stretch reads RFEHSIGVGY…GIDVDKWDYF (161 aa). H164, H203, and D204 together coordinate Mn(2+). H207 and H212 together coordinate dATP. Positions 207 and 212 each coordinate dCTP. The dTTP site is built by H207 and H212. H230 is an active-site residue. D316 provides a ligand contact to Mn(2+). Positions 317, 320, 324, 338, 357, 359, 363, 371, 379, 380, 381, and 382 each coordinate dGTP. 3 residues coordinate dATP: K317, Y320, and D324. Residues K317, Y320, and D324 each coordinate dCTP. DTTP-binding residues include K317, Y320, and D324. R371 contributes to the dATP binding site. Residue R371 participates in dCTP binding. Residue Q380 coordinates dATP. Q380 contributes to the dCTP binding site. Q380 provides a ligand contact to dTTP. Residues R456, K460, and K529 each coordinate GTP. K529 contributes to the dGTP binding site.

This sequence belongs to the SAMHD1 family. As to quaternary structure, homodimer; in absence of GTP and dNTP. Homotetramer; in GTP- and dNTP-bound form. Interacts with rbbp8/CtIP. Zn(2+) serves as cofactor.

It localises to the nucleus. It is found in the chromosome. The catalysed reaction is a 2'-deoxyribonucleoside 5'-triphosphate + H2O = a 2'-deoxyribonucleoside + triphosphate + H(+). It catalyses the reaction dATP + H2O = 2'-deoxyadenosine + triphosphate + H(+). The enzyme catalyses dCTP + H2O = 2'-deoxycytidine + triphosphate + H(+). It carries out the reaction dGTP + H2O = 2'-deoxyguanosine + triphosphate + H(+). The catalysed reaction is dTTP + H2O = thymidine + triphosphate + H(+). With respect to regulation, allosterically activated and regulated via the combined actions of GTP and dNTPs (dATP, dGTP, dTTP and dCTP): Allosteric site 1 binds GTP, while allosteric site 2 binds dNTP. Allosteric activation promotes the formation of highly active homotetramers. Protein that acts both as a host restriction factor involved in defense response to virus and as a regulator of DNA end resection at stalled replication forks. Has deoxynucleoside triphosphate (dNTPase) activity, which is required to restrict infection by viruses: dNTPase activity reduces cellular dNTP levels to levels too low for retroviral reverse transcription to occur, blocking early-stage virus replication in dendritic and other myeloid cells. Functions during S phase at stalled DNA replication forks to promote the resection of gapped or reversed forks: acts by stimulating the exonuclease activity of mre11, activating the ATR-CHK1 pathway and allowing the forks to restart replication. Ability to promote DNA end resection at stalled replication forks is independent of dNTPase activity. The protein is Deoxynucleoside triphosphate triphosphohydrolase SAMHD1 of Xenopus laevis (African clawed frog).